The sequence spans 396 residues: Elongation factor Tu (396 aa).

A tr-type G domain is found at 10–206 (KPHVNVGTIG…TMDSYIPEPV (197 aa)). Residues 19 to 26 (GHVDHGKT) are G1. 19 to 26 (GHVDHGKT) is a GTP binding site. Mg(2+) is bound at residue T26. Residues 60-64 (GITIS) are G2. Residues 81-84 (DCPG) are G3. Residues 81–85 (DCPGH) and 136–139 (NKAD) each bind GTP. A G4 region spans residues 136–139 (NKAD). Positions 174–176 (SAL) are G5.

Belongs to the TRAFAC class translation factor GTPase superfamily. Classic translation factor GTPase family. EF-Tu/EF-1A subfamily. In terms of assembly, monomer.

It localises to the cytoplasm. It carries out the reaction GTP + H2O = GDP + phosphate + H(+). In terms of biological role, GTP hydrolase that promotes the GTP-dependent binding of aminoacyl-tRNA to the A-site of ribosomes during protein biosynthesis. The sequence is that of Elongation factor Tu from Legionella pneumophila (strain Lens).